Consider the following 323-residue polypeptide: Acetyl esterase (323 aa).

The Involved in the stabilization of the negatively charged intermediate by the formation of the oxyanion hole motif lies at 91–93 (HGG). Catalysis depends on residues S165, D262, and H292.

The protein belongs to the 'GDXG' lipolytic enzyme family. In terms of assembly, homodimer. Interacts with MalT and MelA.

The protein localises to the cytoplasm. Its function is as follows. Displays esterase activity towards short chain fatty esters (acyl chain length of up to 8 carbons). Able to hydrolyze triacetylglycerol (triacetin) and tributyrylglycerol (tributyrin), but not trioleylglycerol (triolein) or cholesterol oleate. Negatively regulates MalT activity by antagonizing maltotriose binding. Inhibits MelA galactosidase activity. In Salmonella paratyphi A (strain ATCC 9150 / SARB42), this protein is Acetyl esterase.